A 466-amino-acid chain; its full sequence is Asparagine--tRNA ligase (466 aa).

It belongs to the class-II aminoacyl-tRNA synthetase family. In terms of assembly, homodimer.

It localises to the cytoplasm. It carries out the reaction tRNA(Asn) + L-asparagine + ATP = L-asparaginyl-tRNA(Asn) + AMP + diphosphate + H(+). The protein is Asparagine--tRNA ligase of Pectobacterium atrosepticum (strain SCRI 1043 / ATCC BAA-672) (Erwinia carotovora subsp. atroseptica).